A 270-amino-acid polypeptide reads, in one-letter code: MKVIMTTKIDKASMNIREKLIENFGFTESNLTFDGNRVYEKEDILILTTNEEMIYYDYLDKEIEKQTKIKPEVIVFASRHSSAKKLPSLTTHVTGNWGKAMYGGKDESFAIAFPSAMKLALLKMHELNDLGWTVCYEATHHGPSELEVPSLFIEIGSSEEEWVNDRAGEIIAETIMYVLKKREKFKVALGIGGGHYAPKQTKVALESDLAFSHILPKYAQPVKKEVILRALSRSTEEVEAIYVDWKGSRGETRQLAKELANELGLEFIKD.

Belongs to the DtdA deacylase family. In terms of assembly, monomer. It depends on Zn(2+) as a cofactor.

It catalyses the reaction a D-aminoacyl-tRNA + H2O = a tRNA + a D-alpha-amino acid + H(+). It carries out the reaction glycyl-tRNA(Ala) + H2O = tRNA(Ala) + glycine + H(+). In terms of biological role, D-aminoacyl-tRNA deacylase with broad substrate specificity. By recycling D-aminoacyl-tRNA to D-amino acids and free tRNA molecules, this enzyme counteracts the toxicity associated with the formation of D-aminoacyl-tRNA entities in vivo. The polypeptide is D-aminoacyl-tRNA deacylase (Pyrococcus furiosus (strain ATCC 43587 / DSM 3638 / JCM 8422 / Vc1)).